The sequence spans 468 residues: Tyrosine-protein phosphatase YopH (468 aa).

The segment at 127 to 194 (ARGHVSSHSH…TVSPYGPEAR (68 aa)) is disordered. Positions 130 to 140 (HVSSHSHSVLH) are enriched in low complexity. The Tyrosine-protein phosphatase domain maps to 152-461 (SHLDPRTPPL…DVLIKLAEGQ (310 aa)). Cys403 acts as the Phosphocysteine intermediate in catalysis.

It belongs to the protein-tyrosine phosphatase family. Non-receptor class subfamily. Monomer.

The protein localises to the secreted. The catalysed reaction is O-phospho-L-tyrosyl-[protein] + H2O = L-tyrosyl-[protein] + phosphate. Essential virulence determinant. This protein is a protein tyrosine phosphatase. The essential function of YopH in Yersinia pathogenesis is host-protein dephosphorylation. It contributes to the ability of the bacteria to resist phagocytosis by peritoneal macrophages. In Yersinia enterocolitica, this protein is Tyrosine-protein phosphatase YopH (yopH).